Here is a 457-residue protein sequence, read N- to C-terminus: Multidrug resistance protein MdtK (457 aa).

The next 12 membrane-spanning stretches (helical) occupy residues 11 to 31, 53 to 73, 93 to 113, 127 to 147, 160 to 180, 189 to 209, 243 to 263, 276 to 296, 314 to 334, 350 to 370, 387 to 407, and 418 to 438; these read LLAL…MGFV, IWLP…PVIA, WLAG…GYII, AVGY…FQVA, GMVM…IFIY, GGVG…LAMV, LPIA…ALLV, IALN…AAVT, AART…IFTV, VVTL…SDSI, IFYI…YILA, and PAGF…MMML.

Belongs to the multi antimicrobial extrusion (MATE) (TC 2.A.66.1) family. MdtK subfamily.

The protein resides in the cell inner membrane. Functionally, multidrug efflux pump that functions probably as a Na(+)/drug antiporter. In Escherichia coli (strain SE11), this protein is Multidrug resistance protein MdtK.